The following is a 121-amino-acid chain: ATP synthase epsilon chain (121 aa).

The protein belongs to the ATPase epsilon chain family. As to quaternary structure, F-type ATPases have 2 components, CF(1) - the catalytic core - and CF(0) - the membrane proton channel. CF(1) has five subunits: alpha(3), beta(3), gamma(1), delta(1), epsilon(1). CF(0) has three main subunits: a, b and c.

Its subcellular location is the cell membrane. Its function is as follows. Produces ATP from ADP in the presence of a proton gradient across the membrane. The polypeptide is ATP synthase epsilon chain (Mycolicibacterium smegmatis (strain ATCC 700084 / mc(2)155) (Mycobacterium smegmatis)).